The following is a 422-amino-acid chain: Pre-B-cell leukemia transcription factor 2 (422 aa).

The segment at 1–43 is disordered; that stretch reads MDEQGRLMQARGVGIPGHPIHGGPQTLTPHPMHEPPADNGEPR. Basic and acidic residues predominate over residues 31 to 43; the sequence is PMHEPPADNGEPR. Residues 42 to 236 form the PBC domain; it reads PRKQDIGDIL…VMILRSRFLD (195 aa). The segment at 49 to 128 is PBC-A; that stretch reads DILQQIMTIT…EGVAGPEKGG (80 aa). The interval 131–236 is PBC-B; it reads AAAAAAAAAS…VMILRSRFLD (106 aa). A DNA-binding region (homeobox) is located at residues 237 to 299; the sequence is ARRKRRNFSK…NKRIRYKKNI (63 aa). 2 disordered regions span residues 319-341 and 353-422; these read QGGH…GSFN and QGLN…DTSN. The span at 401-410 shows a compositional bias: polar residues; the sequence is VTPSSVTSPT.

It belongs to the TALE/PBX homeobox family.

It is found in the nucleus. Its function is as follows. Transcriptional activator that binds the sequence 5'-ATCAATCAA-3'. The chain is Pre-B-cell leukemia transcription factor 2 from Xenopus tropicalis (Western clawed frog).